Reading from the N-terminus, the 113-residue chain is Large ribosomal subunit protein bL17 (113 aa).

Belongs to the bacterial ribosomal protein bL17 family. As to quaternary structure, part of the 50S ribosomal subunit. Contacts protein L32.

The sequence is that of Large ribosomal subunit protein bL17 from Symbiobacterium thermophilum (strain DSM 24528 / JCM 14929 / IAM 14863 / T).